Here is a 243-residue protein sequence, read N- to C-terminus: MNNKIDNFLKQKKLIKVISGLNNFNTTHVIKIAKAASKTNASFIDIAAAPKLVEKVKKEVPNLPICVSAIKPELFVPCVKAGAELIEIGNFDSLYNQGYKINFSDVLSLVKQTRSLLPDTPLSVTIPYLLPLNLQLELAYRLEDLNVDLIQTEGKINKITSLLDNRNIETILPTLASTYLIANNVTIPVICASGLTISTIELPFKLNASGIGIGNAVSKLNSTEEMINLLNEISTRINYSTVL.

Belongs to the ycf23 family.

The protein localises to the plastid. Its subcellular location is the cyanelle. This is an uncharacterized protein from Cyanophora paradoxa.